We begin with the raw amino-acid sequence, 530 residues long: Cytochrome P450 78A6 (530 aa).

The chain crosses the membrane as a helical span at residues 25-45 (LAFSLLAVTIIWLAISLFLWT). C474 contributes to the heme binding site.

This sequence belongs to the cytochrome P450 family. Requires heme as cofactor. In terms of tissue distribution, expressed in leaves, sepals, petals, stamens, carpels and developing ovules.

The protein resides in the membrane. In terms of biological role, plays a role in seed and fruit development. Functions probably in association with CYP78A9 in the regulation of seed growth. Acts maternally to promote seed growth. The protein is Cytochrome P450 78A6 (CYP78A6) of Arabidopsis thaliana (Mouse-ear cress).